The primary structure comprises 598 residues: EF-hand and coiled-coil domain-containing protein 1 (598 aa).

A disordered region spans residues 1–22; that stretch reads MEPVSTGAEAGMEGAGGDPYRR. One can recognise an EF-hand domain in the interval 54–89; that stretch reads GLDQYLQEVFHHLDCRGAGRLPRADFRALCAVLGLR. Disordered stretches follow at residues 96-127, 175-198, and 326-411; these read AGQA…DTDE, RLRR…PDCE, and YRSE…KKTP. A compositionally biased stretch (basic residues) spans 175–185; the sequence is RLRRPRRRRRP. The stretch at 196–303 forms a coiled coil; that stretch reads DCERVARLEE…RSLHRVRELE (108 aa). Residues 343-359 show a composition bias toward basic and acidic residues; that stretch reads PGDKSNEPEDAGTRDPD. Residues 394-404 are compositionally biased toward acidic residues; the sequence is SDEEEVEEERW. The stretch at 479–533 forms a coiled coil; it reads TSEEEAELQQKVEENEHLRLELQMVETERVRLSLLEEKLVDVLQLLQRLRDLNIS.

In Homo sapiens (Human), this protein is EF-hand and coiled-coil domain-containing protein 1 (EFCC1).